Here is a 57-residue protein sequence, read N- to C-terminus: Large ribosomal subunit protein bL33 (57 aa).

This sequence belongs to the bacterial ribosomal protein bL33 family.

This chain is Large ribosomal subunit protein bL33, found in Shewanella sp. (strain W3-18-1).